The sequence spans 412 residues: uncharacterized protein (412 aa).

Belongs to the PQQ oxidoreductase GdhB family. Pyrroloquinoline quinone is required as a cofactor.

This is an uncharacterized protein from Synechocystis sp. (strain ATCC 27184 / PCC 6803 / Kazusa).